A 244-amino-acid chain; its full sequence is tRNA1(Val) (adenine(37)-N6)-methyltransferase (244 aa).

This sequence belongs to the methyltransferase superfamily. tRNA (adenine-N(6)-)-methyltransferase family.

It localises to the cytoplasm. It carries out the reaction adenosine(37) in tRNA1(Val) + S-adenosyl-L-methionine = N(6)-methyladenosine(37) in tRNA1(Val) + S-adenosyl-L-homocysteine + H(+). Functionally, specifically methylates the adenine in position 37 of tRNA(1)(Val) (anticodon cmo5UAC). This chain is tRNA1(Val) (adenine(37)-N6)-methyltransferase, found in Photorhabdus laumondii subsp. laumondii (strain DSM 15139 / CIP 105565 / TT01) (Photorhabdus luminescens subsp. laumondii).